Consider the following 123-residue polypeptide: Histone H2B.1, embryonic (123 aa).

Positions 1 to 32 (MAPTGQVAKKGSKKAVKPPRASGGKKRHRKRK) are disordered. The span at 10-32 (KGSKKAVKPPRASGGKKRHRKRK) shows a compositional bias: basic residues. Serine 110 carries O-linked (GlcNAc) serine glycosylation. Lysine 118 participates in a covalent cross-link: Glycyl lysine isopeptide (Lys-Gly) (interchain with G-Cter in ubiquitin).

The protein belongs to the histone H2B family. As to quaternary structure, the nucleosome is a histone octamer containing two molecules each of H2A, H2B, H3 and H4 assembled in one H3-H4 heterotetramer and two H2A-H2B heterodimers. The octamer wraps approximately 147 bp of DNA. Monoubiquitination of Lys-118 gives a specific tag for epigenetic transcriptional activation and is also prerequisite for histone H3 'Lys-4' and 'Lys-79' methylation. In terms of processing, glcNAcylation at Ser-110 promotes monoubiquitination of Lys-118. It fluctuates in response to extracellular glucose, and associates with transcribed genes.

It localises to the nucleus. The protein localises to the chromosome. Core component of nucleosome. Nucleosomes wrap and compact DNA into chromatin, limiting DNA accessibility to the cellular machineries which require DNA as a template. Histones thereby play a central role in transcription regulation, DNA repair, DNA replication and chromosomal stability. DNA accessibility is regulated via a complex set of post-translational modifications of histones, also called histone code, and nucleosome remodeling. The chain is Histone H2B.1, embryonic from Psammechinus miliaris (Green sea urchin).